Here is a 242-residue protein sequence, read N- to C-terminus: Uridylate kinase (242 aa).

Residue 15 to 18 (KLSG) participates in ATP binding. Positions 23 to 28 (GAEGFG) are involved in allosteric activation by GTP. Glycine 57 contributes to the UMP binding site. Residues glycine 58 and arginine 62 each contribute to the ATP site. UMP is bound by residues aspartate 77 and 138–145 (TGNPFFTT). Residues threonine 165, tyrosine 171, and aspartate 174 each coordinate ATP.

Belongs to the UMP kinase family. As to quaternary structure, homohexamer.

It localises to the cytoplasm. The enzyme catalyses UMP + ATP = UDP + ADP. It functions in the pathway pyrimidine metabolism; CTP biosynthesis via de novo pathway; UDP from UMP (UMPK route): step 1/1. With respect to regulation, allosterically activated by GTP. Inhibited by UTP. Functionally, catalyzes the reversible phosphorylation of UMP to UDP. This is Uridylate kinase from Photorhabdus laumondii subsp. laumondii (strain DSM 15139 / CIP 105565 / TT01) (Photorhabdus luminescens subsp. laumondii).